Consider the following 399-residue polypeptide: Immunoglobulin heavy constant gamma 1 (399 aa).

The segment at 1–21 is disordered; that stretch reads ASTKGPSVFPLAPSSKSTSGG. Positions 1 to 98 are CH1; it reads ASTKGPSVFP…PSNTKVDKKV (98 aa). Residues 1–350 are Extracellular-facing; that stretch reads ASTKGPSVFP…DGELDGLWTT (350 aa). Ig-like domains follow at residues 6–99, 121–220, and 229–325; these read PSVF…KKVE, PSVF…KTIS, and PQVY…KSLS. Cysteine 27 and cysteine 83 are oxidised to a cystine. The tract at residues 99–110 is hinge; sequence EPKSCDKTHTCP. The tract at residues 111-223 is CH2; it reads PCPAPELLGG…PIEKTISKAK (113 aa). 2 disulfides stabilise this stretch: cysteine 144–cysteine 204 and cysteine 250–cysteine 308. N-linked (GlcNAc...) (complex) asparagine glycosylation occurs at asparagine 180. Residues 224-330 are CH3; sequence GQPREPQVYT…QKSLSLSPEL (107 aa). Residues 351–371 traverse the membrane as a helical segment; sequence ITIFITLFLLSVCYSATVTFF. Topologically, residues 372–399 are cytoplasmic; sequence KVKWIFSSVVDLKQTIIPDYRNMIGQGA.

Immunoglobulins are composed of two identical heavy chains and two identical light chains; disulfide-linked. Interacts with FCGR1A; this interaction mediates IgG effector functions on monocytes. Interacts with FCGR2A and FCGR3A. Glycosylation on Asn-180 is required for interaction with Fc receptors and ability to activate the complement pathway. Post-translationally, (Microbial infection) Deglycosylation on Asn-180 by S.pyogenes EndoS or Endos2 endoglucosidases prevents interaction between immunoglobulin-gamma (IgG) and Fc receptors, impairing ability to activate the complement pathway.

Its subcellular location is the secreted. It is found in the cell membrane. In terms of biological role, constant region of immunoglobulin heavy chains. Immunoglobulins, also known as antibodies, are membrane-bound or secreted glycoproteins produced by B lymphocytes. In the recognition phase of humoral immunity, the membrane-bound immunoglobulins serve as receptors which, upon binding of a specific antigen, trigger the clonal expansion and differentiation of B lymphocytes into immunoglobulins-secreting plasma cells. Secreted immunoglobulins mediate the effector phase of humoral immunity, which results in the elimination of bound antigens. The antigen binding site is formed by the variable domain of one heavy chain, together with that of its associated light chain. Thus, each immunoglobulin has two antigen binding sites with remarkable affinity for a particular antigen. The variable domains are assembled by a process called V-(D)-J rearrangement and can then be subjected to somatic hypermutations which, after exposure to antigen and selection, allow affinity maturation for a particular antigen. Mediates IgG effector functions on monocytes triggering ADCC of virus-infected cells. In Homo sapiens (Human), this protein is Immunoglobulin heavy constant gamma 1.